Reading from the N-terminus, the 62-residue chain is Photosystem II reaction center protein Z (62 aa).

The next 2 helical transmembrane spans lie at 8–28 (VLTA…VAYA) and 41–61 (YVGS…NFLV).

It belongs to the PsbZ family. As to quaternary structure, PSII is composed of 1 copy each of membrane proteins PsbA, PsbB, PsbC, PsbD, PsbE, PsbF, PsbH, PsbI, PsbJ, PsbK, PsbL, PsbM, PsbT, PsbX, PsbY, PsbZ, Psb30/Ycf12, peripheral proteins PsbO, CyanoQ (PsbQ), PsbU, PsbV and a large number of cofactors. It forms dimeric complexes.

Its subcellular location is the cellular thylakoid membrane. Its function is as follows. May control the interaction of photosystem II (PSII) cores with the light-harvesting antenna, regulates electron flow through the 2 photosystem reaction centers. PSII is a light-driven water plastoquinone oxidoreductase, using light energy to abstract electrons from H(2)O, generating a proton gradient subsequently used for ATP formation. This chain is Photosystem II reaction center protein Z, found in Crocosphaera subtropica (strain ATCC 51142 / BH68) (Cyanothece sp. (strain ATCC 51142)).